We begin with the raw amino-acid sequence, 1388 residues long: Putative ATP-dependent RNA helicase DHX57 (1388 aa).

Basic residues predominate over residues 1-11; the sequence is MSSSVRRKGKP. Disordered stretches follow at residues 1 to 107 and 121 to 154; these read MSSS…MTSE and EQGADAGSERGTSGEEEDSEPQCGEEQGWPAGQE. Over residues 34 to 51 the composition is skewed to gly residues; it reads HGGGGGGGGSCGGGGGGS. Residues 79–89 show a composition bias toward basic and acidic residues; it reads DSNKSKGETRP. Phosphoserine occurs at positions 128 and 133. In terms of domain architecture, UBA spans 175-220; that stretch reads PVPECAVSPLAVQKLSRYGFHTEHCQLALRICDGDLGAALEHLLRQ. Residues 299 to 326 form a C3H1-type zinc finger; sequence DTSPETCKFYLKGNCKFGSKCKFKHEVP. The residue at position 475 (Ser475) is a Phosphoserine. The region spanning 555–722 is the Helicase ATP-binding domain; it reads LKLLSKHQVV…FSYCPVITIP (168 aa). Residue 568–575 coordinates ATP; it reads GMTGCGKT. Residues 669–672 carry the DEVH box motif; that stretch reads DEVH. In terms of domain architecture, Helicase C-terminal spans 832 to 1012; the sequence is LIEALLEWIV…QLCLRIKILE (181 aa).

The protein belongs to the DEAD box helicase family. DEAH subfamily.

It catalyses the reaction ATP + H2O = ADP + phosphate + H(+). Probable ATP-binding RNA helicase. The sequence is that of Putative ATP-dependent RNA helicase DHX57 (Dhx57) from Mus musculus (Mouse).